The following is a 181-amino-acid chain: Thioredoxin M-type, chloroplastic (181 aa).

Residues 1 to 67 (MAIENCLQLS…RQFRYSSVVC (67 aa)) constitute a chloroplast transit peptide. Residues 68–180 (KASEAVKEVQ…LTDSIEKYLS (113 aa)) form the Thioredoxin domain. Residues Cys-104 and Cys-107 each act as nucleophile in the active site. Cys-104 and Cys-107 are joined by a disulfide.

It belongs to the thioredoxin family. Plant M-type subfamily. In terms of assembly, forms a complex with heterodimeric ferredoxin-thioredoxin reductase (FTR) and ferredoxin.

The protein localises to the plastid. It is found in the chloroplast. Its function is as follows. Participates in various redox reactions through the reversible oxidation of the active center dithiol to a disulfide. The M form is known to activate NADP-malate dehydrogenase. The protein is Thioredoxin M-type, chloroplastic of Spinacia oleracea (Spinach).